Consider the following 29-residue polypeptide: Cytochrome b6-f complex subunit 8 (29 aa).

A helical membrane pass occupies residues 3 to 23; it reads IVSLGWAFLMVVFSFSLSLVV.

This sequence belongs to the PetN family. In terms of assembly, the 4 large subunits of the cytochrome b6-f complex are cytochrome b6, subunit IV (17 kDa polypeptide, PetD), cytochrome f and the Rieske protein, while the 4 small subunits are PetG, PetL, PetM and PetN. The complex functions as a dimer.

The protein resides in the plastid. The protein localises to the chloroplast thylakoid membrane. Functionally, component of the cytochrome b6-f complex, which mediates electron transfer between photosystem II (PSII) and photosystem I (PSI), cyclic electron flow around PSI, and state transitions. The protein is Cytochrome b6-f complex subunit 8 of Chlorokybus atmophyticus (Soil alga).